The chain runs to 392 residues: Iripin-4 (392 aa).

The N-terminal stretch at 1 to 16 (MRSLATFMSLLTICWG) is a signal peptide. N-linked (GlcNAc...) asparagine glycans are attached at residues Asn-104, Asn-130, and Asn-265.

This sequence belongs to the serpin family. In terms of tissue distribution, female salivary gland.

The protein resides in the secreted. In terms of biological role, serpin with unknown function. Weakly inhibits human granzyme B (GZMB). Acts as a substrate for porcine elastase. This chain is Iripin-4, found in Ixodes ricinus (Common tick).